Reading from the N-terminus, the 742-residue chain is ATP-dependent RNA helicase DBP7 (742 aa).

The interval 45 to 100 is disordered; sequence GKTVSRKRKANTTGDEGIIPGRGENSIKKLHKESSYSSEEQEKYKGRNAHNTQGRT. The Q motif signature appears at 143–172; the sequence is DQFASLGVTSLLVSHLEQKMRIKKPTSIQK. One can recognise a Helicase ATP-binding domain in the interval 178-372; sequence IIGNAGKNDF…NVALKDYKLI (195 aa). 191–198 is a binding site for ATP; it reads AQTGSGKT. The short motif at 307–310 is the DEAD box element; it reads DEGD. A Helicase C-terminal domain is found at 405–605; that stretch reads TLAATLNNIT…ILMPAFKDVN (201 aa). Positions 701 to 726 are disordered; it reads AMGLQSSKDGNSEKKPTKENSKNKMF. Residues 710-722 are compositionally biased toward basic and acidic residues; the sequence is GNSEKKPTKENSK.

The protein belongs to the DEAD box helicase family. DDX31/DBP7 subfamily.

The protein localises to the nucleus. It localises to the nucleolus. It carries out the reaction ATP + H2O = ADP + phosphate + H(+). Its function is as follows. ATP-binding RNA helicase involved in the biogenesis of 60S ribosomal subunits and is required for the normal formation of 25S and 5.8S rRNAs. This Saccharomyces cerevisiae (strain YJM789) (Baker's yeast) protein is ATP-dependent RNA helicase DBP7 (DBP7).